Consider the following 221-residue polypeptide: Glutathione S-transferase class-mu 26 kDa isozyme 1 (221 aa).

The region spanning 2-82 (PAKLGYWKIR…YIADKHGMIG (81 aa)) is the GST N-terminal domain. Glutathione-binding positions include 7–8 (YW), 40–44 (WFSKK), 53–54 (NL), and 66–67 (QS). In terms of domain architecture, GST C-terminal spans 84–202 (TPEERARVSM…ESNRFIKWPL (119 aa)). Tyrosine 110 is a substrate binding site.

Belongs to the GST superfamily. Mu family. As to quaternary structure, homodimer.

It catalyses the reaction RX + glutathione = an S-substituted glutathione + a halide anion + H(+). In terms of biological role, conjugation of reduced glutathione to a wide number of exogenous and endogenous hydrophobic electrophiles. Functionally, GST isoenzymes appear to play a central role in the parasite detoxification system. Other functions are also suspected including a role in increasing the solubility of haematin in the parasite gut. The chain is Glutathione S-transferase class-mu 26 kDa isozyme 1 from Fasciola hepatica (Liver fluke).